The sequence spans 397 residues: Probable sugar efflux transporter (397 aa).

12 consecutive transmembrane segments (helical) span residues 15–35 (VVTL…PVGL), 50–70 (VGIM…PFML), 81–101 (LICL…AWNF), 103–123 (VLVI…SITA), 136–156 (AQAL…GLPI), 169–189 (TFFA…KLLP), 209–229 (PALM…YTAY), 246–266 (FATV…VVFG), 275–295 (PLIS…LPAA), 301–321 (LAVL…GMQV), 333–353 (VAMA…ALVG), and 364–384 (TIGY…IIIF).

It belongs to the major facilitator superfamily. SotB (TC 2.A.1.2) family.

Its subcellular location is the cell inner membrane. Involved in the efflux of sugars. The physiological role may be the reduction of the intracellular concentration of toxic sugars or sugar metabolites. The chain is Probable sugar efflux transporter from Citrobacter koseri (strain ATCC BAA-895 / CDC 4225-83 / SGSC4696).